The following is a 300-amino-acid chain: NADH-cytochrome b5 reductase 2 (300 aa).

The chain crosses the membrane as a helical span at residues 12-29; sequence FVYPLVGATIGSIGLAYY. The FAD-binding FR-type domain occupies 49-153; the sequence is DQWIDLKLKK…KGPVVKWKWE (105 aa). FAD is bound at residue 156-191; it reads QFKSIALIGGGTGITPLYQLLREITSNPEDKTKVSL.

Belongs to the flavoprotein pyridine nucleotide cytochrome reductase family. FAD serves as cofactor.

It localises to the mitochondrion outer membrane. The catalysed reaction is 2 Fe(III)-[cytochrome b5] + NADH = 2 Fe(II)-[cytochrome b5] + NAD(+) + H(+). Its function is as follows. May mediate the reduction of outer membrane cytochrome b5. This chain is NADH-cytochrome b5 reductase 2 (MCR1), found in Lodderomyces elongisporus (strain ATCC 11503 / CBS 2605 / JCM 1781 / NBRC 1676 / NRRL YB-4239) (Yeast).